The sequence spans 519 residues: Demethylepipodophyllotoxin synthase (519 aa).

Residues 6-26 (CLETLLLGFFVLLPCFFYFVW) form a helical membrane-spanning segment. Heme is bound at residue C458.

Belongs to the cytochrome P450 family. Heme serves as cofactor. As to expression, rhizome-specific expression.

The protein resides in the membrane. It catalyses the reaction (-)-4'-desmethyl-deoxypodophyllotoxin + reduced [NADPH--hemoprotein reductase] + O2 = 4'-demethylepipodophyllotoxin + oxidized [NADPH--hemoprotein reductase] + H2O + H(+). The protein operates within aromatic compound metabolism; phenylpropanoid biosynthesis. Functionally, cytochrome P450 involved in the biosynthesis of etoposide, a chemotherapeutic compound of the topoisomerase inhibitor family. Catalyzes the hydroxylation of deoxypodophyllotoxin to form epipodophyllotoxin. The chain is Demethylepipodophyllotoxin synthase from Sinopodophyllum hexandrum (Himalayan may apple).